A 111-amino-acid chain; its full sequence is UPF0375 protein ule-4 (111 aa).

An N-terminal signal peptide occupies residues 1-18 (MNSRLVLLLAVSVALVSA). N-linked (GlcNAc...) asparagine glycans are attached at residues asparagine 23 and asparagine 58.

The protein belongs to the UPF0375 family.

It localises to the secreted. This Caenorhabditis elegans protein is UPF0375 protein ule-4.